A 229-amino-acid polypeptide reads, in one-letter code: Cytidylate kinase (229 aa).

12–20 is a binding site for ATP; it reads GPSGTGKSS.

This sequence belongs to the cytidylate kinase family. Type 1 subfamily.

The protein localises to the cytoplasm. It catalyses the reaction CMP + ATP = CDP + ADP. The catalysed reaction is dCMP + ATP = dCDP + ADP. The polypeptide is Cytidylate kinase (Rhodococcus opacus (strain B4)).